The primary structure comprises 397 residues: Tyrosine--tRNA ligase (397 aa).

The 'HIGH' region motif lies at 39–48 (PTAPDLHLGH). The 'KMSKS' region motif lies at 223-227 (KMSKS). Lys226 contributes to the ATP binding site. Residues 334 to 395 (YPIANLVHDL…GKRKFAKIRL (62 aa)) enclose the S4 RNA-binding domain.

It belongs to the class-I aminoacyl-tRNA synthetase family. TyrS type 2 subfamily. As to quaternary structure, homodimer.

It is found in the cytoplasm. It carries out the reaction tRNA(Tyr) + L-tyrosine + ATP = L-tyrosyl-tRNA(Tyr) + AMP + diphosphate + H(+). Functionally, catalyzes the attachment of tyrosine to tRNA(Tyr) in a two-step reaction: tyrosine is first activated by ATP to form Tyr-AMP and then transferred to the acceptor end of tRNA(Tyr). The protein is Tyrosine--tRNA ligase of Methylococcus capsulatus (strain ATCC 33009 / NCIMB 11132 / Bath).